The following is a 2622-amino-acid chain: Ankyrin-3 (2622 aa).

The tract at residues 1–44 (MAHAASQLKKNRDLEINAEEETEKKKKHRKRSRDRKKKSDANAS) is disordered. Positions 25–38 (KKKHRKRSRDRKKK) are enriched in basic residues. S39 bears the Phosphoserine mark. 23 ANK repeats span residues 73–102 (NGLN…NVDA), 106–135 (KGNT…NVNA), 139–168 (NGFT…SQSL), 172–201 (DGFT…KGKV), 203–230 (LPAL…NADI), 242–271 (SGFT…AVDF), 275–304 (NDIT…KIDA), 308–337 (DGLT…PILS), 341–370 (NGLS…PVDD), 374–403 (DYLT…NPNA), 407–436 (NGFT…SIQA), 440–469 (SGLT…SPNT), 473–502 (RGET…QVEA), 506–535 (DDQT…SPNA), 539–568 (SGYT…SLSI), 572–601 (KGFT…SPDA), 605–634 (SGLT…SPHA), 638–667 (NGYT…DANA), 671–700 (QGIA…NVNL), 704–733 (SGLT…HVDA), 737–766 (MGYT…KVNA), 770–799 (NGYT…SPNE), and 803–832 (NGNT…EIMT). S631 carries the phosphoserine modification. 10 positions are modified to phosphoserine: V851, S855, S869, S875, S921, S924, S930, S965, S967, and S1121. The interval 868-889 (LSDGEYISDGEEGEDAITGDTD) is disordered. Residues 873 to 884 (YISDGEEGEDAI) show a composition bias toward acidic residues. ZU5 domains lie at 992-1147 (FLVS…VVSR) and 1149-1296 (KQES…LADC). Phosphoserine is present on residues S1458 and S1469. Residues 1510-1539 (TPITVPGPAKSGSLSSSPSNTPSASPLKSI) form a disordered region. Low complexity predominate over residues 1515 to 1536 (PGPAKSGSLSSSPSNTPSASPL). A phosphoserine mark is found at S1621, S1624, S1679, S1984, S2102, S2114, and S2117. Disordered stretches follow at residues 1968 to 1992 (VESK…WTEF), 2099 to 2147 (ILES…FHEV), and 2292 to 2312 (SPDV…KDNQ). A compositionally biased stretch (basic and acidic residues) spans 1977 to 1986 (PKSDKGHSPE). A compositionally biased stretch (basic and acidic residues) spans 2106–2127 (FSQHDQDKSPLSDSGFETRSEK). Positions 2128–2137 (TPSAPQSAES) are enriched in polar residues. In terms of domain architecture, Death spans 2336–2420 (TDIRMAIVAD…DIVTLLEGPI (85 aa)). 3 positions are modified to phosphoserine: S2457, S2475, and S2544. The disordered stretch occupies residues 2568–2622 (CVPVGMKKMTRTPADGKARLNLQEEEGSARSEPKQGEGYKVKTKKEIRNVEKKAH). A compositionally biased stretch (basic and acidic residues) spans 2594 to 2622 (GSARSEPKQGEGYKVKTKKEIRNVEKKAH).

In terms of assembly, may be a constituent of a NFASC/NRCAM/ankyrin G complex. Interacts with RHBG. Directly interacts with DMD and betaDAG1; this interaction does not interfere with DMD-binding and is required for DMD and betaDAG1 retention at costameres. Interacts (via N-terminal ANK repeats) with SCHIP1 isoform 7 (via C-terminus); this interaction is required for the localization at axon initial segments (AISs) and nodes of Ranvier (NRs). Interacts with PLEC and FLNC. Interacts (via ANK repeats) with IQCJ-SCHIP1; required for IQCJ-SCHIP1 localization at axon initial segments (AIS) and nodes of Ranvier. Interacts with SCHIP1. Interacts with KCNA1; this inhibits channel activity. Interacts with SCN5A. Interacts with PKP2 and GJA1/CX43. As to quaternary structure, interacts (via its C-terminal muscle-specific Obscurin/Titin-Binding-related domain sequence) with PLEC and FLNC. Expressed in the heart (at protein level). Expressed in skeletal muscle (at protein level). Expressed at highest levels in brain and testis, followed by skin, kidney, liver and spleen. As to expression, may be specifically expressed in muscle tissues, including heart and skeletal muscle (extensor digitorum longus) (at protein level). In terms of tissue distribution, expressed in skeletal muscle, brain, lung, heart, testes and kidney.

The protein localises to the cytoplasm. It is found in the cytoskeleton. The protein resides in the cell projection. It localises to the axon. Its subcellular location is the cell membrane. The protein localises to the sarcolemma. It is found in the postsynaptic cell membrane. The protein resides in the lysosome. It localises to the T-tubule. Membrane-cytoskeleton linker. May participate in the maintenance/targeting of ion channels and cell adhesion molecules at the nodes of Ranvier and axonal initial segments. In skeletal muscle, required for costamere localization of DMD and betaDAG1. Regulates KCNA1 channel activity in function of dietary Mg(2+) levels, and thereby contributes to the regulation of renal Mg(2+) reabsorption. Required for intracellular adhesion and junctional conductance in myocytes, potentially via stabilization of GJA1/CX43 protein abundance and promotion of PKP2, GJA1/CX43, and SCN5A/Nav1.5 localization to cell-cell junctions. The chain is Ankyrin-3 (Ank3) from Rattus norvegicus (Rat).